A 152-amino-acid polypeptide reads, in one-letter code: Deoxyuridine 5'-triphosphate nucleotidohydrolase (152 aa).

Residues 72–74, Asn-85, and 89–91 contribute to the substrate site; these read RSG and TID.

The protein belongs to the dUTPase family. Mg(2+) serves as cofactor.

It carries out the reaction dUTP + H2O = dUMP + diphosphate + H(+). Its pathway is pyrimidine metabolism; dUMP biosynthesis; dUMP from dCTP (dUTP route): step 2/2. Functionally, this enzyme is involved in nucleotide metabolism: it produces dUMP, the immediate precursor of thymidine nucleotides and it decreases the intracellular concentration of dUTP so that uracil cannot be incorporated into DNA. This is Deoxyuridine 5'-triphosphate nucleotidohydrolase from Rhodopseudomonas palustris (strain ATCC BAA-98 / CGA009).